The sequence spans 351 residues: Sesquiterpene synthase 14 (351 aa).

Positions 87, 223, 227, and 231 each coordinate Mg(2+). The DDXXD motif motif lies at 87–91; that stretch reads DEYTD. The short motif at 223–231 is the NSE/DTE motif element; it reads NDIASYNKE. (2E,6E)-farnesyl diphosphate is bound by residues Arg-312 and Tyr-313.

Belongs to the terpene synthase family. Mg(2+) serves as cofactor.

The enzyme catalyses (2E,6E)-farnesyl diphosphate = pentalenene + diphosphate. Functionally, terpene cyclase that catalyzes the cyclization of farnesyl diphosphate (FPP) to pentalenene as a major product, as well as caryophyllene. This Postia placenta (strain ATCC 44394 / Madison 698-R) (Brown rot fungus) protein is Sesquiterpene synthase 14.